The sequence spans 466 residues: Replication termination factor 1 (466 aa).

DNA-binding domain stretches follow at residues 94-249 and 250-421; these read RDYT…LRRK and YNPF…KKTL. HTH myb-type domains are found at residues 251 to 304 and 305 to 363; these read NPFK…QPGE and INRS…SRDI. DNA-binding regions (H-T-H motif) lie at residues 278 to 300 and 336 to 359; these read WSLI…RDYI and WSLI…YTLI.

The protein resides in the nucleus. Mediates site-specific replication termination at the polar replication barrier RTS1, a barrier which ensures that replication of the mat1 locus in S.pombe occurs in the centromere-proximal direction. In Schizosaccharomyces pombe (strain 972 / ATCC 24843) (Fission yeast), this protein is Replication termination factor 1 (rtf1).